We begin with the raw amino-acid sequence, 490 residues long: Subtilisin-like protease 8 (490 aa).

The first 26 residues, 1-26 (MKGLLSLSVLPVLAYASPMIVDSIHQ), serve as a signal peptide directing secretion. Residues 27 to 134 (DAAPILSSTN…YIERDSEVRA (108 aa)) constitute a propeptide that is removed on maturation. The Inhibitor I9 domain occupies 43–133 (SYIVVFKKGV…EYIERDSEVR (91 aa)). Residues 144–450 (PWGLARISHR…GGSDNYKEIV (307 aa)) enclose the Peptidase S8 domain. Active-site charge relay system residues include Asp180 and His212. A glycan (N-linked (GlcNAc...) asparagine) is linked at Asn282. Catalysis depends on Ser378, which acts as the Charge relay system. Residue Asn455 is glycosylated (N-linked (GlcNAc...) asparagine).

The protein belongs to the peptidase S8 family.

The protein resides in the secreted. In terms of biological role, secreted subtilisin-like serine protease with keratinolytic activity that contributes to pathogenicity. The polypeptide is Subtilisin-like protease 8 (SUB8) (Arthroderma otae (strain ATCC MYA-4605 / CBS 113480) (Microsporum canis)).